The sequence spans 460 residues: Bifunctional protein GlmU (460 aa).

The tract at residues 1-229 (MTNYAIILAA…FNESLGVNDR (229 aa)) is pyrophosphorylase. Residues 8 to 11 (LAAG), Lys-22, Gln-72, and 77 to 78 (GT) contribute to the UDP-N-acetyl-alpha-D-glucosamine site. Asp-102 provides a ligand contact to Mg(2+). Residues Gly-139, Glu-154, Asn-169, and Asn-227 each coordinate UDP-N-acetyl-alpha-D-glucosamine. A Mg(2+)-binding site is contributed by Asn-227. Residues 230–250 (VALATAETVMRQRITQKHMVN) form a linker region. An N-acetyltransferase region spans residues 251–460 (GVTFHNPETV…RLAHHPSRSK (210 aa)). UDP-N-acetyl-alpha-D-glucosamine is bound by residues Arg-332 and Lys-350. The active-site Proton acceptor is His-362. UDP-N-acetyl-alpha-D-glucosamine contacts are provided by Tyr-365 and Asn-376. Residues Ala-379, 385–386 (NY), Ser-404, Ala-422, and Arg-439 each bind acetyl-CoA.

It in the N-terminal section; belongs to the N-acetylglucosamine-1-phosphate uridyltransferase family. The protein in the C-terminal section; belongs to the transferase hexapeptide repeat family. As to quaternary structure, homotrimer. Mg(2+) serves as cofactor.

The protein resides in the cytoplasm. It carries out the reaction alpha-D-glucosamine 1-phosphate + acetyl-CoA = N-acetyl-alpha-D-glucosamine 1-phosphate + CoA + H(+). The catalysed reaction is N-acetyl-alpha-D-glucosamine 1-phosphate + UTP + H(+) = UDP-N-acetyl-alpha-D-glucosamine + diphosphate. The protein operates within nucleotide-sugar biosynthesis; UDP-N-acetyl-alpha-D-glucosamine biosynthesis; N-acetyl-alpha-D-glucosamine 1-phosphate from alpha-D-glucosamine 6-phosphate (route II): step 2/2. It participates in nucleotide-sugar biosynthesis; UDP-N-acetyl-alpha-D-glucosamine biosynthesis; UDP-N-acetyl-alpha-D-glucosamine from N-acetyl-alpha-D-glucosamine 1-phosphate: step 1/1. It functions in the pathway bacterial outer membrane biogenesis; LPS lipid A biosynthesis. Its function is as follows. Catalyzes the last two sequential reactions in the de novo biosynthetic pathway for UDP-N-acetylglucosamine (UDP-GlcNAc). The C-terminal domain catalyzes the transfer of acetyl group from acetyl coenzyme A to glucosamine-1-phosphate (GlcN-1-P) to produce N-acetylglucosamine-1-phosphate (GlcNAc-1-P), which is converted into UDP-GlcNAc by the transfer of uridine 5-monophosphate (from uridine 5-triphosphate), a reaction catalyzed by the N-terminal domain. This is Bifunctional protein GlmU from Streptococcus pyogenes serotype M3 (strain ATCC BAA-595 / MGAS315).